The following is a 673-amino-acid chain: UvrABC system protein B (673 aa).

The Helicase ATP-binding domain occupies Glu26 to Arg183. Residue Gly39 to Thr46 participates in ATP binding. The short motif at Tyr92 to Val115 is the Beta-hairpin element. One can recognise a Helicase C-terminal domain in the interval Gln431 to Leu597. Residues Ala608–Met627 form a disordered region. The 36-residue stretch at Gln633 to Leu668 folds into the UVR domain.

Belongs to the UvrB family. Forms a heterotetramer with UvrA during the search for lesions. Interacts with UvrC in an incision complex.

It is found in the cytoplasm. In terms of biological role, the UvrABC repair system catalyzes the recognition and processing of DNA lesions. A damage recognition complex composed of 2 UvrA and 2 UvrB subunits scans DNA for abnormalities. Upon binding of the UvrA(2)B(2) complex to a putative damaged site, the DNA wraps around one UvrB monomer. DNA wrap is dependent on ATP binding by UvrB and probably causes local melting of the DNA helix, facilitating insertion of UvrB beta-hairpin between the DNA strands. Then UvrB probes one DNA strand for the presence of a lesion. If a lesion is found the UvrA subunits dissociate and the UvrB-DNA preincision complex is formed. This complex is subsequently bound by UvrC and the second UvrB is released. If no lesion is found, the DNA wraps around the other UvrB subunit that will check the other stand for damage. The polypeptide is UvrABC system protein B (Escherichia coli O81 (strain ED1a)).